Here is a 264-residue protein sequence, read N- to C-terminus: Hydroxyethylthiazole kinase (264 aa).

M52 is a substrate binding site. ATP is bound by residues R127 and T173. G200 is a substrate binding site.

The protein belongs to the Thz kinase family. Mg(2+) serves as cofactor.

The catalysed reaction is 5-(2-hydroxyethyl)-4-methylthiazole + ATP = 4-methyl-5-(2-phosphooxyethyl)-thiazole + ADP + H(+). Its pathway is cofactor biosynthesis; thiamine diphosphate biosynthesis; 4-methyl-5-(2-phosphoethyl)-thiazole from 5-(2-hydroxyethyl)-4-methylthiazole: step 1/1. Functionally, catalyzes the phosphorylation of the hydroxyl group of 4-methyl-5-beta-hydroxyethylthiazole (THZ). This chain is Hydroxyethylthiazole kinase, found in Pectobacterium atrosepticum (strain SCRI 1043 / ATCC BAA-672) (Erwinia carotovora subsp. atroseptica).